We begin with the raw amino-acid sequence, 173 residues long: MAAGSGGGTVGLVLPRVASLSGLDGAPTVPEGSDKALMHLGDPPRRCDTHPDGTSSAAAALVLRRIDVHPLLTGLGRGRQTVSLRNGHLVATANRAILSRRRSRLTRGRSFTSHLITSCPRLDDHQHRHPTRCRAEHAGCTVATCIPNAHDPAPGHQTPRWGPFRLKPAYTRI.

This is an uncharacterized protein from Mycobacterium tuberculosis (strain CDC 1551 / Oshkosh).